Consider the following 285-residue polypeptide: HTH-type transcriptional regulator MurR (285 aa).

Residues 1-77 (MLYLTKIRNA…MALIGEYSAS (77 aa)) enclose the HTH rpiR-type domain. Residues 37–56 (SRQMAKQLGISQSSIVKFAQ) constitute a DNA-binding region (H-T-H motif). In terms of domain architecture, SIS spans 128 to 268 (IIEVISKAPF…FVGLVQLNDV (141 aa)).

In terms of assembly, homotetramer.

The protein operates within amino-sugar metabolism; N-acetylmuramate degradation [regulation]. In terms of biological role, represses the expression of the murPQ operon involved in the uptake and degradation of N-acetylmuramic acid (MurNAc). Binds to two adjacent inverted repeats within the operator region. MurNAc 6-phosphate, the substrate of MurQ, is the specific inducer that weakens binding of MurR to the operator. The polypeptide is HTH-type transcriptional regulator MurR (Escherichia coli (strain ATCC 8739 / DSM 1576 / NBRC 3972 / NCIMB 8545 / WDCM 00012 / Crooks)).